The primary structure comprises 134 residues: Phosphoribosyl-AMP cyclohydrolase (134 aa).

D80 is a Mg(2+) binding site. C81 lines the Zn(2+) pocket. Residues D82 and D84 each contribute to the Mg(2+) site. Zn(2+)-binding residues include C98 and C105.

The protein belongs to the PRA-CH family. Homodimer. Requires Mg(2+) as cofactor. Zn(2+) serves as cofactor.

Its subcellular location is the cytoplasm. The enzyme catalyses 1-(5-phospho-beta-D-ribosyl)-5'-AMP + H2O = 1-(5-phospho-beta-D-ribosyl)-5-[(5-phospho-beta-D-ribosylamino)methylideneamino]imidazole-4-carboxamide. The protein operates within amino-acid biosynthesis; L-histidine biosynthesis; L-histidine from 5-phospho-alpha-D-ribose 1-diphosphate: step 3/9. In terms of biological role, catalyzes the hydrolysis of the adenine ring of phosphoribosyl-AMP. The chain is Phosphoribosyl-AMP cyclohydrolase from Bordetella bronchiseptica (strain ATCC BAA-588 / NCTC 13252 / RB50) (Alcaligenes bronchisepticus).